The chain runs to 304 residues: MVTIVFDHPAEDFPELKIAGEFTNWEGVPMKINTSSGKWEYKFDESSVTKHNDKDKVHFKFIDQNGNWFADDEYPKEVDEHSNENNVATLNNEEDGGSAGEEKDEGDKTAHNTNENGSELYYEGPETPTPSLKGNVTFPSPKTAISQDGSAFAKETTRKERKYEHAPLNEVPVERDPKEENKELSPNFSQEQTENKQDKGLDNLSEGNDNDNTRVNEDTDVTDTQESEHEINGSDTENTDMSEQEEIQKIDKPADQNAKSIVKEGDANTEDYESVLKKLLGALGRFFGSWFSWLTTKMSSSEAS.

The tract at residues 72-269 is disordered; sequence DEYPKEVDEH…SIVKEGDANT (198 aa). Residues 73 to 83 show a composition bias toward basic and acidic residues; that stretch reads EYPKEVDEHSN. Polar residues predominate over residues 129-149; it reads TPSLKGNVTFPSPKTAISQDG. Position 140 is a phosphoserine (Ser140). Basic and acidic residues predominate over residues 155 to 183; it reads ETTRKERKYEHAPLNEVPVERDPKEENKE. Phosphoserine occurs at positions 185 and 205.

Interacts with ULP1.

The protein localises to the endoplasmic reticulum membrane. The protein resides in the mitochondrion outer membrane. It is found in the nucleus envelope. In Saccharomyces cerevisiae (strain ATCC 204508 / S288c) (Baker's yeast), this protein is ULP1-interacting protein 4 (UIP4).